We begin with the raw amino-acid sequence, 93 residues long: Small ribosomal subunit protein uS19c (93 aa).

It belongs to the universal ribosomal protein uS19 family.

It is found in the plastid. It localises to the chloroplast. Protein S19 forms a complex with S13 that binds strongly to the 16S ribosomal RNA. In Lolium perenne (Perennial ryegrass), this protein is Small ribosomal subunit protein uS19c.